Reading from the N-terminus, the 381-residue chain is KRR1 small subunit processome component homolog (381 aa).

The tract at residues 1 to 51 (MASPSLERPEKGAGKSEFRNQKPKPENQDESELLTVPDGWKEPAFSKEDNP) is disordered. Position 2 is an N-acetylalanine (alanine 2). A phosphoserine mark is found at serine 3 and serine 5. 2 stretches are compositionally biased toward basic and acidic residues: residues 7–27 (ERPE…KPEN) and 39–51 (GWKE…EDNP). Lysine 24 participates in a covalent cross-link: Glycyl lysine isopeptide (Lys-Gly) (interchain with G-Cter in SUMO2). In terms of domain architecture, KH spans 154–206 (KERFVKRRQRLIGPKGSTLKALELLTNCYIMVQGNTVSAIGPFSGLKEVRKVV). The segment covering 250 to 262 (NVNKRKEPKKKTV) has biased composition (basic residues). 2 disordered regions span residues 250-278 (NVNK…ESQI) and 309-338 (AISK…ASTE). Glycyl lysine isopeptide (Lys-Gly) (interchain with G-Cter in SUMO2) cross-links involve residues lysine 340 and lysine 369.

This sequence belongs to the KRR1 family. In terms of assembly, part of the small subunit (SSU) processome, composed of more than 70 proteins and the RNA chaperone small nucleolar RNA (snoRNA) U3. As to quaternary structure, (Microbial infection) Directly interacts with HIV-1 protein VPR. Also identified in a complex with NR3C1 and HIV-1 protein VPR.

It localises to the nucleus. The protein localises to the nucleolus. Its subcellular location is the cytoplasm. Part of the small subunit (SSU) processome, first precursor of the small eukaryotic ribosomal subunit. During the assembly of the SSU processome in the nucleolus, many ribosome biogenesis factors, an RNA chaperone and ribosomal proteins associate with the nascent pre-rRNA and work in concert to generate RNA folding, modifications, rearrangements and cleavage as well as targeted degradation of pre-ribosomal RNA by the RNA exosome. The chain is KRR1 small subunit processome component homolog from Homo sapiens (Human).